The sequence spans 295 residues: Trimeric intracellular cation channel type A (295 aa).

Residues 1 to 18 (MELLSALSLGELALSFSR) lie on the Lumenal side of the membrane. A helical transmembrane segment spans residues 19-39 (VPLFPVFDLSYFIVSILYLKY). Residues 40–51 (EPGAVELSRRHP) lie on the Cytoplasmic side of the membrane. A helical membrane pass occupies residues 52 to 72 (VASWLCAMLHCFGSYILADLL). Residues 73 to 85 (LGEPLIDYFSNNS) are Lumenal-facing. Ca(2+) is bound at residue Gly74. Residues 86–106 (SILLASAVWYLIFFCPLDLFY) form a helical membrane-spanning segment. The Cytoplasmic portion of the chain corresponds to 107–144 (KCVCFLPVKLIFVAMKEVVRVRKIAVGIHHAHHHYHHG). 2 residues coordinate a 1,2-diacyl-sn-glycero-3-phospho-(1D-myo-inositol-4,5-bisphosphate): Lys122 and Arg126. Residues 145–165 (WFIMIATGWVKGSGVALLSNV) traverse the membrane as a helical segment. The Lumenal segment spans residues 166–178 (EQLLRGVWKPETN). Residues 179–199 (EILHMSFPTKASLYGAILFTL) traverse the membrane as a helical segment. At 200-209 (QQTRWLPVSK) the chain is on the cytoplasmic side. A helical membrane pass occupies residues 210–230 (ASLIFIFTMFMVSCKVFLTAT). Over 231-234 (HSHS) the chain is Lumenal. Residues 235-255 (SPFDVLEAYVCPVLFGTGSGG) traverse the membrane as a helical segment. At 256-295 (DHPQDNHGAWPGGPPSGALATKSKEELSEGSRKKKTKKAD) the chain is on the cytoplasmic side. The disordered stretch occupies residues 256–295 (DHPQDNHGAWPGGPPSGALATKSKEELSEGSRKKKTKKAD). The segment covering 277–286 (KSKEELSEGS) has biased composition (basic and acidic residues).

Belongs to the TMEM38 family. As to quaternary structure, homotrimer; conformation seems to be controled by binding to diacylglycerol (DAG).

It localises to the sarcoplasmic reticulum membrane. It is found in the nucleus membrane. The catalysed reaction is K(+)(in) = K(+)(out). Channel activity is activated by a change of voltage within the sarcoplasmic reticulum lumen and blocked by luminal high Ca(2+) levels. In terms of biological role, intracellular monovalent cation channel required for maintenance of rapid intracellular calcium release. Acts as a potassium counter-ion channel that functions in synchronization with calcium release from intracellular stores. Opened by a change of voltage within the sarcoplasmic reticulum lumen. The protein is Trimeric intracellular cation channel type A of Oryctolagus cuniculus (Rabbit).